The chain runs to 141 residues: Large ribosomal subunit protein uL11 (141 aa).

The protein belongs to the universal ribosomal protein uL11 family. Part of the ribosomal stalk of the 50S ribosomal subunit. Interacts with L10 and the large rRNA to form the base of the stalk. L10 forms an elongated spine to which L12 dimers bind in a sequential fashion forming a multimeric L10(L12)X complex. Post-translationally, one or more lysine residues are methylated.

Functionally, forms part of the ribosomal stalk which helps the ribosome interact with GTP-bound translation factors. This chain is Large ribosomal subunit protein uL11, found in Streptococcus pyogenes serotype M1.